The chain runs to 1054 residues: Isoleucine--tRNA ligase (1054 aa).

Residues 58-68 carry the 'HIGH' region motif; sequence PFANGLPHYGH. Positions 627-631 match the 'KMSKS' region motif; the sequence is KMSKS. Lysine 630 contributes to the ATP binding site.

This sequence belongs to the class-I aminoacyl-tRNA synthetase family. IleS type 2 subfamily. As to quaternary structure, monomer. Requires Zn(2+) as cofactor.

The protein resides in the cytoplasm. It catalyses the reaction tRNA(Ile) + L-isoleucine + ATP = L-isoleucyl-tRNA(Ile) + AMP + diphosphate. In terms of biological role, catalyzes the attachment of isoleucine to tRNA(Ile). As IleRS can inadvertently accommodate and process structurally similar amino acids such as valine, to avoid such errors it has two additional distinct tRNA(Ile)-dependent editing activities. One activity is designated as 'pretransfer' editing and involves the hydrolysis of activated Val-AMP. The other activity is designated 'posttransfer' editing and involves deacylation of mischarged Val-tRNA(Ile). The protein is Isoleucine--tRNA ligase of Corynebacterium efficiens (strain DSM 44549 / YS-314 / AJ 12310 / JCM 11189 / NBRC 100395).